We begin with the raw amino-acid sequence, 338 residues long: P2Y purinoceptor 14 (338 aa).

The Extracellular segment spans residues 1-29 (MNNSTTTDPPNQPCSWNTLITKQIIPVLY). N-linked (GlcNAc...) asparagine glycans are attached at residues Asn2 and Asn3. A helical membrane pass occupies residues 30–50 (GMVFITGLLLNGISGWIFFYV). The Cytoplasmic segment spans residues 51-55 (PSSKS). A helical membrane pass occupies residues 56–76 (FIIYLKNIVVADFLMGLTFPF). At 77–96 (KVLGDSGLGPWQVNVFVCRV) the chain is on the extracellular side. Cysteines 94 and 172 form a disulfide. A helical transmembrane segment spans residues 97–117 (SAVIFYVNMYVSIVFFGLISF). Over 118 to 139 (DRYYKIVKPLLTSIVQSVNYSK) the chain is Cytoplasmic. The helical transmembrane segment at 140–160 (LLSVLVWMLMLLLAVPNIILT) threads the bilayer. Residues 161 to 188 (NQGVKEVTKIQCMELKNELGRKWHKASN) are Extracellular-facing. Residues 189–209 (YIFVSIFWVVFLLLIVFYTAI) traverse the membrane as a helical segment. The Cytoplasmic segment spans residues 210–234 (TRKIFKSHLKSRKNSTSVKRKSSRN). A helical membrane pass occupies residues 235 to 255 (IFSIVLVFVVCFVPYHIARIP). Residues 256 to 278 (YTKSQTEGHYSCRTKETLLYAKE) lie on the Extracellular side of the membrane. The chain crosses the membrane as a helical span at residues 279 to 299 (FTLLLSAANVCLDPIIYFFLC). Over 300 to 338 (QPFREVLNKKLHMSLKVQNDLEVSKTKRENAIHESTDTL) the chain is Cytoplasmic.

Belongs to the G-protein coupled receptor 1 family.

The protein localises to the cell membrane. In terms of biological role, receptor for UDP-glucose coupled to G-proteins. This Mus musculus (Mouse) protein is P2Y purinoceptor 14 (P2ry14).